The following is a 179-amino-acid chain: Inner membrane-spanning protein YciB (179 aa).

5 consecutive transmembrane segments (helical) span residues 22 to 42, 50 to 70, 76 to 96, 121 to 141, and 149 to 169; these read IYAA…YSWV, MALI…FFHN, WKVT…QWVM, LAWA…AFWL, and FKVF…GIYI.

The protein belongs to the YciB family.

The protein localises to the cell inner membrane. Plays a role in cell envelope biogenesis, maintenance of cell envelope integrity and membrane homeostasis. The protein is Inner membrane-spanning protein YciB of Escherichia coli O127:H6 (strain E2348/69 / EPEC).